The sequence spans 356 residues: S-adenosylmethionine:tRNA ribosyltransferase-isomerase (356 aa).

Belongs to the QueA family. Monomer.

Its subcellular location is the cytoplasm. The enzyme catalyses 7-aminomethyl-7-carbaguanosine(34) in tRNA + S-adenosyl-L-methionine = epoxyqueuosine(34) in tRNA + adenine + L-methionine + 2 H(+). Its pathway is tRNA modification; tRNA-queuosine biosynthesis. Transfers and isomerizes the ribose moiety from AdoMet to the 7-aminomethyl group of 7-deazaguanine (preQ1-tRNA) to give epoxyqueuosine (oQ-tRNA). This is S-adenosylmethionine:tRNA ribosyltransferase-isomerase from Shigella boydii serotype 4 (strain Sb227).